The primary structure comprises 184 residues: UPF0149 protein PSPTO_5224 (184 aa).

The protein belongs to the UPF0149 family.

The sequence is that of UPF0149 protein PSPTO_5224 from Pseudomonas syringae pv. tomato (strain ATCC BAA-871 / DC3000).